The chain runs to 126 residues: CD59 glycoprotein (126 aa).

An N-terminal signal peptide occupies residues Met1–Ser22. The 88-residue stretch at Leu23 to Thr110 folds into the UPAR/Ly6 domain. Intrachain disulfides connect Cys25/Cys48, Cys28/Cys35, Cys41/Cys61, Cys67/Cys85, and Cys86/Cys91. The N-linked (GlcNAc...) asparagine glycan is linked to Asn38. The GPI-anchor amidated asparagine moiety is linked to residue Asn101. A propeptide spans Gly102 to Phe126 (removed in mature form).

Interacts with T-cell surface antigen CD2. In terms of processing, N- and O-glycosylated.

The protein localises to the cell membrane. It is found in the secreted. In terms of biological role, potent inhibitor of the complement membrane attack complex (MAC) action, which protects self-cells from damage during complement activation. Acts by binding to the beta-haipins of C8 (C8A and C8B) components of the assembling MAC, forming an intermolecular beta-sheet that prevents incorporation of the multiple copies of C9 required for complete formation of the osmolytic pore. This is CD59 glycoprotein from Rattus norvegicus (Rat).